The primary structure comprises 513 residues: Noroxomaritidine synthase (513 aa).

Residues 14-34 (HYPEILIAIACFLIFSLLLSA) traverse the membrane as a helical segment. Cys-458 contributes to the heme binding site.

It belongs to the cytochrome P450 family. It depends on heme as a cofactor.

The protein resides in the membrane. The catalysed reaction is 4'-O-methylnorbelladine + reduced [NADPH--hemoprotein reductase] + O2 = (10bS,4aR)-noroxomaritidine + oxidized [NADPH--hemoprotein reductase] + 2 H2O + H(+). It carries out the reaction 4'-O-methylnorbelladine + reduced [NADPH--hemoprotein reductase] + O2 = (10bR,4aS)-noroxomaritidine + oxidized [NADPH--hemoprotein reductase] + 2 H2O + H(+). It functions in the pathway alkaloid biosynthesis. Cytochrome P450 that catalyzes an intramolecular para-para' C-C phenol coupling of 4'-O-methylnorbelladine in alkaloids biosynthesis, including haemanthamine- and crinamine-type alkaloids, promising anticancer agents. Catalyzes the formation of (10bR,4aS)-noroxomaritidine and (10bS,4aR)-noroxomaritidine from 4'-O-methylnorbelladine. Also produces N-demethylnarwedine as a minor product. Involved in the biosynthesis of haemanthamine. Can also use 4'-O-methyl-N-methylnorbelladine, (S)- and (R)-coclaurine as substrates, but not 3'-O-methylnorbelladine, 3',4'-O-dimethylnorbelladine, norbelladine, haemanthamine, (10bS,4aR)- or (10bR,4aS)-noroxomaritidine, isovanillin or tyramine. The polypeptide is Noroxomaritidine synthase (Narcissus aff. pseudonarcissus MK-2014 (Daffodil)).